The chain runs to 118 residues: Putative pterin-4-alpha-carbinolamine dehydratase (118 aa).

It belongs to the pterin-4-alpha-carbinolamine dehydratase family.

The catalysed reaction is (4aS,6R)-4a-hydroxy-L-erythro-5,6,7,8-tetrahydrobiopterin = (6R)-L-erythro-6,7-dihydrobiopterin + H2O. The protein is Putative pterin-4-alpha-carbinolamine dehydratase of Xanthomonas oryzae pv. oryzae (strain MAFF 311018).